Here is a 977-residue protein sequence, read N- to C-terminus: Probable UDP-N-acetylglucosamine--peptide N-acetylglucosaminyltransferase SEC (977 aa).

14 TPR repeats span residues 2–35 (ISSK…SVSS), 53–86 (DDAR…NPLR), 87–120 (TDNL…QPQF), 121–154 (AECY…RPNF), 155–188 (ADAW…NPLL), 189–222 (VDAH…QPTF), 223–256 (AIAW…KPAF), 257–290 (PDAY…RPNS), 291–324 (AMAF…DPRF), 325–358 (LEAY…QPNH), 359–392 (PQAM…TTGL), 393–426 (SAPF…DPLA), 427–460 (ADAL…RPTM), and 461–494 (AEAH…RPDF). A catalytic region region spans residues 495 to 977 (PEATCNLLHT…ENDLEFPHDR (483 aa)).

This sequence belongs to the glycosyltransferase 41 family. O-GlcNAc transferase subfamily. Interacts with TCP14 and TCP15. Interacts with ATX1.

It carries out the reaction L-seryl-[protein] + UDP-N-acetyl-alpha-D-glucosamine = 3-O-(N-acetyl-beta-D-glucosaminyl)-L-seryl-[protein] + UDP + H(+). It catalyses the reaction L-threonyl-[protein] + UDP-N-acetyl-alpha-D-glucosamine = 3-O-(N-acetyl-beta-D-glucosaminyl)-L-threonyl-[protein] + UDP + H(+). Its pathway is protein modification; protein glycosylation. Functionally, O-linked N-acetylglucosamine transferase (OGT) that mediates O-glycosylation of capsid protein (CP) of virus in case of infection by Plum pox virus. OGTs catalyze the addition of nucleotide-activated sugars directly onto the polypeptide through O-glycosidic linkage with the hydroxyl of serine or threonine. Probably acts by adding O-linked sugars to yet unknown proteins. Its OGT activity has been proved in vitro but not in vivo. Required with SPY for gamete and seed development. Mediates O-glycosylation of the DELLA protein RGA, a repressor of the gibberellin (GA) signaling pathway. O-glycosylation by SEC inhibits RGA binding to four of its interactors PIF3, PIF4, JAZ1, and BZR1 that are key regulators in light, jasmonate, and brassinosteroid signaling pathways, respectively. Activates ATX1 through O-GlcNAc modification to augment ATX1-mediated H3K4me3 histone epigenetic modification at FLC locus, thus preventing premature flowering. This chain is Probable UDP-N-acetylglucosamine--peptide N-acetylglucosaminyltransferase SEC, found in Arabidopsis thaliana (Mouse-ear cress).